Consider the following 181-residue polypeptide: ATP-dependent protease subunit HslV (181 aa).

Thr5 is an active-site residue. The Na(+) site is built by Ser162, Cys165, and Thr168.

It belongs to the peptidase T1B family. HslV subfamily. A double ring-shaped homohexamer of HslV is capped on each side by a ring-shaped HslU homohexamer. The assembly of the HslU/HslV complex is dependent on binding of ATP.

It is found in the cytoplasm. The catalysed reaction is ATP-dependent cleavage of peptide bonds with broad specificity.. Allosterically activated by HslU binding. Protease subunit of a proteasome-like degradation complex believed to be a general protein degrading machinery. This Campylobacter hominis (strain ATCC BAA-381 / DSM 21671 / CCUG 45161 / LMG 19568 / NCTC 13146 / CH001A) protein is ATP-dependent protease subunit HslV.